The primary structure comprises 381 residues: NF-kappa-B inhibitor-like protein 1 (381 aa).

A disordered region spans residues Met-1–Arg-32. Residues Ser-14–Ser-26 show a composition bias toward polar residues. ANK repeat units lie at residues Gly-64–His-93 and His-97–Lys-133. Disordered stretches follow at residues Gly-129–Arg-166, Asp-186–Glu-242, and Leu-257–Leu-294. Position 150 is a phosphoserine (Ser-150). Acidic residues predominate over residues Ser-150 to Val-159. Composition is skewed to basic and acidic residues over residues Arg-204 to Arg-228 and Leu-257 to Gly-270.

As to quaternary structure, interacts with CACTIN (via N-terminal domain); the interaction occurs in a pro-inflammatory-independent manner.

Its subcellular location is the nucleus. In terms of biological role, involved in the regulation of innate immune response. Acts as negative regulator of Toll-like receptor and interferon-regulatory factor (IRF) signaling pathways. Contributes to the negative regulation of transcriptional activation of NF-kappa-B target genes in response to endogenous pro-inflammatory stimuli. This Rattus norvegicus (Rat) protein is NF-kappa-B inhibitor-like protein 1 (Nfkbil1).